The primary structure comprises 930 residues: Translation initiation factor IF-2 (930 aa).

The interval 51 to 325 (PGAGKSAAKP…TREIGGVKVP (275 aa)) is disordered. Composition is skewed to low complexity over residues 56-111 (SAAK…KPGV) and 121-162 (TPAA…GNNP). Residues 263 to 295 (RPGGGPGGGPGRPGGPGGRGGRGNAQGAFGRGG) are compositionally biased toward gly residues. Residues 296–307 (GPRKGRKSKRAK) show a composition bias toward basic residues. Positions 308–320 (RQEFEQQHTREIG) are enriched in basic and acidic residues. The tr-type G domain occupies 422–596 (PRPAVVTVMG…LTADAALELT (175 aa)). The G1 stretch occupies residues 431 to 438 (GHVDHGKT). A GTP-binding site is contributed by 431–438 (GHVDHGKT). The tract at residues 456-460 (GITQH) is G2. The interval 481-484 (DTPG) is G3. GTP-binding positions include 481 to 485 (DTPGH) and 535 to 538 (NKID). A G4 region spans residues 535–538 (NKID). The tract at residues 571–573 (SAR) is G5.

It belongs to the TRAFAC class translation factor GTPase superfamily. Classic translation factor GTPase family. IF-2 subfamily.

It localises to the cytoplasm. In terms of biological role, one of the essential components for the initiation of protein synthesis. Protects formylmethionyl-tRNA from spontaneous hydrolysis and promotes its binding to the 30S ribosomal subunits. Also involved in the hydrolysis of GTP during the formation of the 70S ribosomal complex. The sequence is that of Translation initiation factor IF-2 from Micrococcus luteus (strain ATCC 4698 / DSM 20030 / JCM 1464 / CCM 169 / CCUG 5858 / IAM 1056 / NBRC 3333 / NCIMB 9278 / NCTC 2665 / VKM Ac-2230) (Micrococcus lysodeikticus).